The primary structure comprises 617 residues: Dihydroxy-acid dehydratase (617 aa).

Asp-81 contributes to the Mg(2+) binding site. Position 122 (Cys-122) interacts with [2Fe-2S] cluster. Residues Asp-123 and Lys-124 each coordinate Mg(2+). Lys-124 carries the N6-carboxylysine modification. Cys-195 serves as a coordination point for [2Fe-2S] cluster. Glu-492 is a Mg(2+) binding site. The Proton acceptor role is filled by Ser-518.

The protein belongs to the IlvD/Edd family. In terms of assembly, homodimer. [2Fe-2S] cluster serves as cofactor. Requires Mg(2+) as cofactor.

It catalyses the reaction (2R)-2,3-dihydroxy-3-methylbutanoate = 3-methyl-2-oxobutanoate + H2O. The catalysed reaction is (2R,3R)-2,3-dihydroxy-3-methylpentanoate = (S)-3-methyl-2-oxopentanoate + H2O. Its pathway is amino-acid biosynthesis; L-isoleucine biosynthesis; L-isoleucine from 2-oxobutanoate: step 3/4. It functions in the pathway amino-acid biosynthesis; L-valine biosynthesis; L-valine from pyruvate: step 3/4. Functionally, functions in the biosynthesis of branched-chain amino acids. Catalyzes the dehydration of (2R,3R)-2,3-dihydroxy-3-methylpentanoate (2,3-dihydroxy-3-methylvalerate) into 2-oxo-3-methylpentanoate (2-oxo-3-methylvalerate) and of (2R)-2,3-dihydroxy-3-methylbutanoate (2,3-dihydroxyisovalerate) into 2-oxo-3-methylbutanoate (2-oxoisovalerate), the penultimate precursor to L-isoleucine and L-valine, respectively. This Xanthobacter autotrophicus (strain ATCC BAA-1158 / Py2) protein is Dihydroxy-acid dehydratase.